A 178-amino-acid chain; its full sequence is CCHC-type zinc finger nucleic acid binding protein (178 aa).

The residue at position 2 (serine 2) is an N-acetylserine. The segment at 4–21 adopts a CCHC-type 1 zinc-finger fold; sequence NECFKCGRSGHWARECPT. An N6-acetyllysine modification is found at lysine 8. Omega-N-methylarginine; by PRMT1 occurs at positions 25 and 27. Positions 25-38 are RNA-binding Arg/Gly-rich region (RGG-box); it reads RGRGMRSRGRGGFT. An omega-N-methylarginine mark is found at arginine 32 and arginine 34. Serine 49 bears the Phosphoserine mark. 6 consecutive CCHC-type zinc fingers follow at residues 52–69, 72–90, 97–114, 118–135, 136–153, and 157–174; these read DICY…DCDL, DEAC…DCKE, QCCY…DCDH, QKCY…DCTK, VKCY…NCSK, and VNCY…ECTI. Omega-N-methylarginine is present on residues aspartate 72, glycine 79, and arginine 80.

In terms of assembly, associates with the 40S ribosomal subunit, the 80S ribosome and with polysomes. Post-translationally, arginine methylation by PRMT1 in the Arg/Gly-rich region impedes RNA binding.

It is found in the nucleus. Its subcellular location is the cytoplasm. The protein localises to the endoplasmic reticulum. Its function is as follows. Single-stranded DNA-binding protein that preferentially binds to the sterol regulatory element (SRE) sequence 5'-GTGCGGTG-3', and thereby mediates transcriptional repression. Has a role as transactivator of the Myc promoter. Binds single-stranded RNA in a sequence-specific manner. Binds G-rich elements in target mRNA coding sequences. Prevents G-quadruplex structure formation in vitro, suggesting a role in supporting translation by resolving stable structures on mRNAs. The chain is CCHC-type zinc finger nucleic acid binding protein from Mus musculus (Mouse).